Here is a 237-residue protein sequence, read N- to C-terminus: Ras-related protein Rab-23 (237 aa).

Residues valine 20, glycine 21, lysine 22, serine 23, serine 24, tyrosine 38, and threonine 41 each coordinate GTP. Mg(2+) is bound at residue serine 23. The Switch 1 signature appears at arginine 28–phenylalanine 46. The Mg(2+) site is built by threonine 41 and aspartate 64. The Switch 2 motif lies at threonine 65–alanine 84. GTP is bound by residues glycine 67, asparagine 121, lysine 122, aspartate 124, serine 151, valine 152, and lysine 153. Serine 186 and serine 187 each carry phosphoserine. Polar residues predominate over residues serine 188–threonine 208. The interval serine 188–proline 237 is disordered. The residue at position 234 (cysteine 234) is a Cysteine methyl ester. The S-geranylgeranyl cysteine moiety is linked to residue cysteine 234. The propeptide at serine 235–proline 237 is removed in mature form.

The protein belongs to the small GTPase superfamily. Rab family. Interacts with SUFU. Mg(2+) is required as a cofactor.

The protein resides in the cell membrane. It localises to the cytoplasm. The protein localises to the cytoplasmic vesicle. It is found in the autophagosome. Its subcellular location is the endosome membrane. The protein resides in the phagosome. It localises to the phagosome membrane. It catalyses the reaction GTP + H2O = GDP + phosphate + H(+). Regulated by guanine nucleotide exchange factors (GEFs) which promote the exchange of bound GDP for free GTP. Regulated by GTPase activating proteins (GAPs) which increase the GTP hydrolysis activity. Inhibited by GDP dissociation inhibitors (GDIs). The small GTPases Rab are key regulators of intracellular membrane trafficking, from the formation of transport vesicles to their fusion with membranes. Rabs cycle between an inactive GDP-bound form and an active GTP-bound form that is able to recruit to membranes different set of downstream effectors directly responsible for vesicle formation, movement, tethering and fusion. Together with SUFU, prevents nuclear import of GLI1, and thereby inhibits GLI1 transcription factor activity. Regulates GLI1 in differentiating chondrocytes. Likewise, regulates GLI3 proteolytic processing and modulates GLI2 and GLI3 transcription factor activity. Plays a role in autophagic vacuole assembly, and mediates defense against pathogens, such as S.aureus, by promoting their capture by autophagosomes that then merge with lysosomes. The polypeptide is Ras-related protein Rab-23 (Homo sapiens (Human)).